A 230-amino-acid polypeptide reads, in one-letter code: Large ribosomal subunit protein uL1 (230 aa).

This sequence belongs to the universal ribosomal protein uL1 family. In terms of assembly, part of the 50S ribosomal subunit.

Binds directly to 23S rRNA. The L1 stalk is quite mobile in the ribosome, and is involved in E site tRNA release. Functionally, protein L1 is also a translational repressor protein, it controls the translation of the L11 operon by binding to its mRNA. This chain is Large ribosomal subunit protein uL1, found in Granulibacter bethesdensis (strain ATCC BAA-1260 / CGDNIH1).